A 327-amino-acid chain; its full sequence is Aldo/keto reductase slr0942 (327 aa).

18–27 (GEQIPALGLG) is an NADP(+) binding site. Residue tyrosine 57 is the Proton donor of the active site. Residue histidine 119 participates in substrate binding. 216-280 (SPLGSGDRPA…SVNPERLEQN (65 aa)) contributes to the NADP(+) binding site.

This sequence belongs to the aldo/keto reductase family. Monomer.

The enzyme catalyses a secondary alcohol + NADP(+) = a ketone + NADPH + H(+). Its activity is regulated as follows. Curcumin non-competitively inhibits the enzyme with respect to furfural. To a lesser extent, enzyme activity is also inhibited by indomethacin, coumarate, coumarin, and alrestatin. In terms of biological role, aldo/keto reductase with broad substrate spectrum. Catalyzes the NADPH-dependent reduction of aldehyde- and ketone-groups of different classes of carbonyl compounds to the corresponding alcohols. Highest enzymatic efficiency is observed with 4-oxonon-2-enal (4-ONE) and 4-hydroxynon-2-enal (4-HNE), that are lipid peroxidation products, and 9,10-phenanthrenequinone (9,10-PQ), a photoproduct of phenanthrene that is one of the most prevalent polycyclic aromatic hydrocarbons in the environment. Is also active on sugar-derived reactive carbonyls such as methylglyoxal (MG), glyoxal and 3-deoxyglucosone (3-DG), and on other lipid-derived carbonyls such as acrolein. May be involved in the detoxification of the toxic lipid peroxidation products 4-ONE and 4-HNE besides many other exo- and endogenic reactive carbonyl compounds (RCs) that may lead to photoinhibition or other cell damages. This chain is Aldo/keto reductase slr0942, found in Synechocystis sp. (strain ATCC 27184 / PCC 6803 / Kazusa).